The following is a 313-amino-acid chain: Homoserine O-succinyltransferase (313 aa).

Cys142 functions as the Acyl-thioester intermediate in the catalytic mechanism. Substrate contacts are provided by Lys163 and Ser192. His235 functions as the Proton acceptor in the catalytic mechanism. Glu237 is a catalytic residue. Residue Arg249 participates in substrate binding.

This sequence belongs to the MetA family.

The protein localises to the cytoplasm. It catalyses the reaction L-homoserine + succinyl-CoA = O-succinyl-L-homoserine + CoA. It functions in the pathway amino-acid biosynthesis; L-methionine biosynthesis via de novo pathway; O-succinyl-L-homoserine from L-homoserine: step 1/1. Transfers a succinyl group from succinyl-CoA to L-homoserine, forming succinyl-L-homoserine. The sequence is that of Homoserine O-succinyltransferase from Vibrio atlanticus (strain LGP32) (Vibrio splendidus (strain Mel32)).